The chain runs to 418 residues: Tyrosine--tRNA ligase (418 aa).

Tyr-38 is an L-tyrosine binding site. Residues 43–52 carry the 'HIGH' region motif; it reads CTAKSLHVGS. Residues Tyr-175 and Gln-179 each coordinate L-tyrosine. Residues 235-239 carry the 'KMSKS' region motif; sequence KMGKT. An ATP-binding site is contributed by Lys-238. Residues 348-413 form the S4 RNA-binding domain; the sequence is LPIIKLLQMC…CGKKRHLKVM (66 aa).

This sequence belongs to the class-I aminoacyl-tRNA synthetase family. TyrS type 1 subfamily. Homodimer.

The protein localises to the cytoplasm. It catalyses the reaction tRNA(Tyr) + L-tyrosine + ATP = L-tyrosyl-tRNA(Tyr) + AMP + diphosphate + H(+). In terms of biological role, catalyzes the attachment of tyrosine to tRNA(Tyr) in a two-step reaction: tyrosine is first activated by ATP to form Tyr-AMP and then transferred to the acceptor end of tRNA(Tyr). This Ehrlichia chaffeensis (strain ATCC CRL-10679 / Arkansas) protein is Tyrosine--tRNA ligase.